Consider the following 151-residue polypeptide: Cell division protein SepF (151 aa).

Residues 31–53 (EEVEEPRRRSRTGVKQERETGQN) form a disordered region.

This sequence belongs to the SepF family. As to quaternary structure, homodimer. Interacts with FtsZ.

The protein resides in the cytoplasm. Its function is as follows. Cell division protein that is part of the divisome complex and is recruited early to the Z-ring. Probably stimulates Z-ring formation, perhaps through the cross-linking of FtsZ protofilaments. Its function overlaps with FtsA. The polypeptide is Cell division protein SepF (Halalkalibacterium halodurans (strain ATCC BAA-125 / DSM 18197 / FERM 7344 / JCM 9153 / C-125) (Bacillus halodurans)).